We begin with the raw amino-acid sequence, 186 residues long: UPF0301 protein Swit_2673 (186 aa).

This sequence belongs to the UPF0301 (AlgH) family.

The chain is UPF0301 protein Swit_2673 from Rhizorhabdus wittichii (strain DSM 6014 / CCUG 31198 / JCM 15750 / NBRC 105917 / EY 4224 / RW1) (Sphingomonas wittichii).